Consider the following 209-residue polypeptide: GTP-binding nuclear protein Ran1B (209 aa).

One can recognise a Small GTPase Ran-type domain in the interval 1–162 (NFKLVIVGDG…LYLARKLAGD (162 aa)). Residue 9-16 (DGGTGKTT) coordinates GTP. The tract at residues 28–36 (KKYEPTIGV) is switch-I. GTP is bound by residues glycine 59, 113–116 (NKVD), and 141–143 (SAK). Residues 59-75 (GQEKFGGLRDGYYIHGQ) form a switch-II region. Over residues 187–200 (QHEAELAAAASQPL) the composition is skewed to low complexity. The interval 187–209 (QHEAELAAAASQPLPDDDDDAFD) is disordered.

This sequence belongs to the small GTPase superfamily. Ran family. Found in a nuclear export complex with RanGTP, exportin and pre-miRNA.

Its subcellular location is the nucleus. GTP-binding protein involved in nucleocytoplasmic transport. Required for the import of protein into the nucleus and also for RNA export. Involved in chromatin condensation and control of cell cycle. In Lotus japonicus (Lotus corniculatus var. japonicus), this protein is GTP-binding nuclear protein Ran1B (RAN1B).